Consider the following 783-residue polypeptide: Centrosomal protein of 89 kDa (783 aa).

The interval proline 28–arginine 49 is disordered. Positions arginine 34–proline 45 are enriched in pro residues. Serine 50 bears the Phosphoserine mark. Disordered regions lie at residues glycine 63 to tyrosine 157 and aspartate 176 to glycine 226. Polar residues predominate over residues alanine 94–serine 107. Basic and acidic residues-rich tracts occupy residues glutamate 139–aspartate 155 and glutamine 196–leucine 214. Coiled-coil stretches lie at residues glutamate 234 to glutamine 333 and leucine 369 to glutamate 719.

The protein resides in the cytoplasm. It localises to the cytosol. The protein localises to the cytoskeleton. Its subcellular location is the microtubule organizing center. It is found in the centrosome. The protein resides in the spindle pole. It localises to the centriole. The protein localises to the mitochondrion intermembrane space. Functionally, required for ciliogenesis. Also plays a role in mitochondrial metabolism where it may modulate complex IV activity. The chain is Centrosomal protein of 89 kDa (CEP89) from Homo sapiens (Human).